Reading from the N-terminus, the 236-residue chain is Small ribosomal subunit protein uS2c (236 aa).

Belongs to the universal ribosomal protein uS2 family.

The protein localises to the plastid. The protein resides in the chloroplast. The polypeptide is Small ribosomal subunit protein uS2c (rps2) (Illicium oligandrum (Star anise)).